A 163-amino-acid chain; its full sequence is Nucleotide-binding protein BcerKBAB4_1061 (163 aa).

It belongs to the YajQ family.

Its function is as follows. Nucleotide-binding protein. This is Nucleotide-binding protein BcerKBAB4_1061 from Bacillus mycoides (strain KBAB4) (Bacillus weihenstephanensis).